The primary structure comprises 131 residues: Translation initiation factor 5A (131 aa).

A Hypusine modification is found at K36.

It belongs to the eIF-5A family.

Its subcellular location is the cytoplasm. Functions by promoting the formation of the first peptide bond. This is Translation initiation factor 5A (eIF5A) from Saccharolobus islandicus (strain Y.N.15.51 / Yellowstone #2) (Sulfolobus islandicus).